The chain runs to 393 residues: Succinate--CoA ligase [ADP-forming] subunit beta (393 aa).

Positions 9-251 (KALFEKFGVL…LNEEDPKEIE (243 aa)) constitute an ATP-grasp domain. Residues Lys46, 53–55 (GRG), Ser109, and Glu114 contribute to the ATP site. Mg(2+)-binding residues include Asn206 and Asp220. Residues Asn271 and 328–330 (GIM) contribute to the substrate site.

Belongs to the succinate/malate CoA ligase beta subunit family. In terms of assembly, heterotetramer of two alpha and two beta subunits. Mg(2+) is required as a cofactor.

The catalysed reaction is succinate + ATP + CoA = succinyl-CoA + ADP + phosphate. It carries out the reaction GTP + succinate + CoA = succinyl-CoA + GDP + phosphate. It functions in the pathway carbohydrate metabolism; tricarboxylic acid cycle; succinate from succinyl-CoA (ligase route): step 1/1. Its function is as follows. Succinyl-CoA synthetase functions in the citric acid cycle (TCA), coupling the hydrolysis of succinyl-CoA to the synthesis of either ATP or GTP and thus represents the only step of substrate-level phosphorylation in the TCA. The beta subunit provides nucleotide specificity of the enzyme and binds the substrate succinate, while the binding sites for coenzyme A and phosphate are found in the alpha subunit. The polypeptide is Succinate--CoA ligase [ADP-forming] subunit beta (Opitutus terrae (strain DSM 11246 / JCM 15787 / PB90-1)).